The chain runs to 85 residues: ATP synthase subunit c (85 aa).

Helical transmembrane passes span 1–21 (MLAWVIIASIITAGFSVALVG) and 53–73 (LLFALAFIETIMIFTLTVALI).

The protein belongs to the ATPase C chain family. As to quaternary structure, F-type ATPases have 2 components, F(1) - the catalytic core - and F(0) - the membrane proton channel. F(1) has five subunits: alpha(3), beta(3), gamma(1), delta(1), epsilon(1). F(0) has three main subunits: a(1), b(2) and c(10-14). The alpha and beta chains form an alternating ring which encloses part of the gamma chain. F(1) is attached to F(0) by a central stalk formed by the gamma and epsilon chains, while a peripheral stalk is formed by the delta and b chains.

The protein localises to the cell inner membrane. In terms of biological role, f(1)F(0) ATP synthase produces ATP from ADP in the presence of a proton or sodium gradient. F-type ATPases consist of two structural domains, F(1) containing the extramembraneous catalytic core and F(0) containing the membrane proton channel, linked together by a central stalk and a peripheral stalk. During catalysis, ATP synthesis in the catalytic domain of F(1) is coupled via a rotary mechanism of the central stalk subunits to proton translocation. Functionally, key component of the F(0) channel; it plays a direct role in translocation across the membrane. A homomeric c-ring of between 10-14 subunits forms the central stalk rotor element with the F(1) delta and epsilon subunits. The chain is ATP synthase subunit c from Dictyoglomus turgidum (strain DSM 6724 / Z-1310).